The chain runs to 597 residues: MSTMFLRTLREDPADADVDSAKLLQRAGYIRKAAPGIWTWLPLGLRVLNKIEAIIREEINGIGAQEVHFPALLPREPYEATHRWEEYGDNIFRLKDRHEADYLLAPTHEEMFTLLVKDMYSSYKDLPVTLYQIQTKYRDEFRPRAGLIRGREFVMKDAYSFTIDEEGMRKAYYDERGAYERIFQRLDLKYVPVFAMSGPMGGSASEEFLAPMPIGEDTFALAPSGKAWNVEALSTPELPEIDASTTPAASKEATPDAKTIDNMIERANADHPRTDGREWQASDILKNVVITVKHPEDEEHDEPWREVIVVGVPGDRTVDMKRLEAQFAPAELEEATEEDLKQHPELVPGYIGPMVLGPQAEAAGVKNPVRYLIDAHVVKGSAWFTGADENEVDYYNLVYGRDFKVDGVVEAVEVRHGDMSPDGSGPLSFERGVEIGQVFQLGLKYSKALDLKVLDQNGKAVPVWMGCYGIGVSRVLACIAETHHDEAGLAWPSVIAPAAVHVVATGKDAVAFEGAEKLVAELEAKGLEVIYDDRKKVSPGVKFKDAELIGVPLVAVVGRDYVNDGTIELRDRNGENKVAVPAAEAADALAERFAALS.

This sequence belongs to the class-II aminoacyl-tRNA synthetase family. ProS type 1 subfamily. In terms of assembly, homodimer.

Its subcellular location is the cytoplasm. The enzyme catalyses tRNA(Pro) + L-proline + ATP = L-prolyl-tRNA(Pro) + AMP + diphosphate. Catalyzes the attachment of proline to tRNA(Pro) in a two-step reaction: proline is first activated by ATP to form Pro-AMP and then transferred to the acceptor end of tRNA(Pro). As ProRS can inadvertently accommodate and process non-cognate amino acids such as alanine and cysteine, to avoid such errors it has two additional distinct editing activities against alanine. One activity is designated as 'pretransfer' editing and involves the tRNA(Pro)-independent hydrolysis of activated Ala-AMP. The other activity is designated 'posttransfer' editing and involves deacylation of mischarged Ala-tRNA(Pro). The misacylated Cys-tRNA(Pro) is not edited by ProRS. The chain is Proline--tRNA ligase from Bifidobacterium longum (strain NCC 2705).